The chain runs to 806 residues: Ankyrin repeat, bromo and BTB domain-containing protein DDB_G0293800 (806 aa).

ANK repeat units follow at residues 1 to 30 (MSNK…DVNQ), 34 to 63 (SNRY…LVNC), 67 to 96 (RGAT…DVNC), 100 to 130 (AGST…DVNL), and 134 to 163 (EGST…RADV). The segment covering 210–228 (GVGKKEDDDNNMKIDKQES) has biased composition (basic and acidic residues). The tract at residues 210–231 (GVGKKEDDDNNMKIDKQESEQQ) is disordered. The 69-residue stretch at 239 to 307 (SDITFLIENQ…IYTGSIEKFE (69 aa)) folds into the BTB domain. Disordered regions lie at residues 423–517 (TRTA…SDSM) and 621–743 (QNFP…EERR). Composition is skewed to low complexity over residues 426–436 (ANANASNSNQS) and 443–511 (TSTT…SSSS). The region spanning 516–622 (SMNEKNLTFC…NAFDQKFLQN (107 aa)) is the Bromo domain. Residues 626 to 641 (EKPPTYKPPPPTPTPI) show a composition bias toward pro residues. Residues 642–658 (PTQQQQQQSTSSTSTPT) show a composition bias toward low complexity. A compositionally biased stretch (basic and acidic residues) spans 666 to 675 (DEHVKVKEDT). The span at 676–693 (NSAQPTSSSSNHTNGENA) shows a compositional bias: polar residues. Residues 694-733 (SSSSSSSSSKQSNNNNNNNNNNNSNSTTNSSSSSSSTTTT) show a composition bias toward low complexity. Residues 727–806 (SSSTTTTQKK…ECFKKQKQDE (80 aa)) form the NET domain.

In Dictyostelium discoideum (Social amoeba), this protein is Ankyrin repeat, bromo and BTB domain-containing protein DDB_G0293800.